The sequence spans 624 residues: Cilia- and flagella-associated protein 206 (624 aa).

This sequence belongs to the CFAP206 family.

It localises to the cytoplasm. Its subcellular location is the cytoskeleton. It is found in the cilium axoneme. The protein localises to the cilium basal body. Essential for sperm motility and is involved in the regulation of the beating frequency of motile cilia on the epithelial cells of the respiratory tract. Required for the establishment of radial spokes in sperm flagella. The sequence is that of Cilia- and flagella-associated protein 206 (cfap206) from Danio rerio (Zebrafish).